The following is a 217-amino-acid chain: Probable transaldolase (217 aa).

Lysine 83 functions as the Schiff-base intermediate with substrate in the catalytic mechanism.

The protein belongs to the transaldolase family. Type 3B subfamily.

Its subcellular location is the cytoplasm. The catalysed reaction is D-sedoheptulose 7-phosphate + D-glyceraldehyde 3-phosphate = D-erythrose 4-phosphate + beta-D-fructose 6-phosphate. The protein operates within carbohydrate degradation; pentose phosphate pathway; D-glyceraldehyde 3-phosphate and beta-D-fructose 6-phosphate from D-ribose 5-phosphate and D-xylulose 5-phosphate (non-oxidative stage): step 2/3. In terms of biological role, transaldolase is important for the balance of metabolites in the pentose-phosphate pathway. The polypeptide is Probable transaldolase (Chelativorans sp. (strain BNC1)).